The chain runs to 564 residues: MFS-type transporter astH (564 aa).

N-linked (GlcNAc...) asparagine glycosylation is present at Asn23. Residues 26–59 (KDTLVNCSPDPENPEKGQASSPRTQISVDDNEES) are disordered. Over residues 43 to 53 (QASSPRTQISV) the composition is skewed to polar residues. Helical transmembrane passes span 69-89 (LAMIMISLCLAVFCLALDTTI), 106-126 (DVGWYGSAYLLTTSALTLSFG), 143-163 (GMFEIGSLICGATPNSLGLII), and 197-217 (GILGGLFGVASVVGPLIGGAF). The N-linked (GlcNAc...) asparagine glycan is linked to Asn220. The next 6 helical transmembrane spans lie at 225–245 (WCFYINLPLGAVTGLFLILFF), 266–286 (LLGSLCFLPAIICVLLALQWG), 297–317 (IIALFTVFGVLLLAFAGVQWW), 339–359 (LFSFCLNASFIIFTYYLPMWF), 375–395 (LPMVLAVVIFSIISGGLVGAL), and 396–416 (GYYTPFMVIAPLIAAIGAGLL). A glycan (N-linked (GlcNAc...) asparagine) is linked at Asn425. 2 consecutive transmembrane segments (helical) span residues 461–481 (TGTVIVMFMQTIGGAIFMSVG) and 537–557 (FYVAVAMAVLALPGALVMQWI).

The protein belongs to the major facilitator superfamily. TCR/Tet family.

It localises to the membrane. MFS-type transporter; part of the gene cluster that mediates the biosynthesis of astellolides, drimane-type sesquiterpene esters that show antimicrobial, anti-inflammatory, and anti-tumor activities. Seems not to be involved in astellolides translocation. In Aspergillus oryzae (strain ATCC 42149 / RIB 40) (Yellow koji mold), this protein is MFS-type transporter astH.